The sequence spans 860 residues: Probable leucine--tRNA ligase, cytoplasmic (860 aa).

Positions 41-51 (PYMNGKLHLGH) match the 'HIGH' region motif. Residues 552-556 (KMSKS) carry the 'KMSKS' region motif. Residue lysine 555 coordinates ATP.

It belongs to the class-I aminoacyl-tRNA synthetase family.

It localises to the cytoplasm. The catalysed reaction is tRNA(Leu) + L-leucine + ATP = L-leucyl-tRNA(Leu) + AMP + diphosphate. This Enterocytozoon bieneusi (strain H348) (Microsporidian parasite) protein is Probable leucine--tRNA ligase, cytoplasmic.